Here is a 117-residue protein sequence, read N- to C-terminus: Large ribosomal subunit protein bL20 (117 aa).

The protein belongs to the bacterial ribosomal protein bL20 family.

Functionally, binds directly to 23S ribosomal RNA and is necessary for the in vitro assembly process of the 50S ribosomal subunit. It is not involved in the protein synthesizing functions of that subunit. The polypeptide is Large ribosomal subunit protein bL20 (Rickettsia peacockii (strain Rustic)).